Consider the following 552-residue polypeptide: Kumamolisin (552 aa).

A compositionally biased stretch (basic and acidic residues) spans M1–L17. Positions M1–V34 are disordered. The Peptidase S53 domain occupies A193 to S546. Catalysis depends on charge relay system residues E266, D270, and S466. Positions 504, 505, 522, 524, and 526 each coordinate Ca(2+).

Forms monomeric and dimeric crystals. It depends on Ca(2+) as a cofactor. Post-translationally, autocatalytically processed.

The protein resides in the secreted. The enzyme catalyses The enzyme preferentially hydrolyzes peptides having an Ala or Pro residue at P2 position and prefers such charged amino acid residues as Glu or Arg at the P2' position. In the oxidized insulin B chain, kumamolysin preferentially cleaves between Leu(15) and Tyr(16).. Its activity is regulated as follows. Inactivated at 22.4 and 37 degrees Celsius, but not at 60 degrees Celsius, by aldehyde-type inhibitors such as acetyl-Ile-Ala-Phe-CHO and acetyl-Ile-Pro-Phe-CHO. Insensitive to the known carboxyl proteinase inhibitors pepstatin, diazoacetyl-DL-norleucine methyl ester (DAN) and 1,2-epoxy-3-(p-nitrophenoxy)propane (EPNP). Not inhibited by Ala-Ala-Phe-chloromethylketone, an inhibitor of the human tripeptidyl-peptidase 1. In terms of biological role, thermostable pepstatin-insensitive serine-carboxyl proteinase. Preferentially hydrolyzes synthetic peptides having an Ala or Pro residue at the P2 position and charged amino acids such as Glu or Arg at the P2' position. In vitro, specifically hydrolyzes the Leu-15-Tyr-16 peptide bond in oxidized insulin B-chain. Additional cleavage of oxidized insulin B-chain at Phe-25-Tyr-26 is detected at a considerably lower rate. Can hydrolyze collagen and the chromogenic substrate azocoll. Shows lower activity with albumin and casein. Shows very weak tripeptidyl peptidase activity. This is Kumamolisin from Bacillus sp. (strain MN-32).